The sequence spans 267 residues: 2-keto-3-deoxy-L-rhamnonate aldolase (267 aa).

Catalysis depends on histidine 49, which acts as the Proton acceptor. Residue glutamine 151 participates in substrate binding. Glutamate 153 serves as a coordination point for Mg(2+). Alanine 178 and aspartate 179 together coordinate substrate. A Mg(2+)-binding site is contributed by aspartate 179.

Belongs to the HpcH/HpaI aldolase family. KDR aldolase subfamily. As to quaternary structure, homohexamer. Mg(2+) serves as cofactor.

It carries out the reaction 2-dehydro-3-deoxy-L-rhamnonate = (S)-lactaldehyde + pyruvate. Catalyzes the reversible retro-aldol cleavage of 2-keto-3-deoxy-L-rhamnonate (KDR) to pyruvate and lactaldehyde. The sequence is that of 2-keto-3-deoxy-L-rhamnonate aldolase from Salmonella typhi.